The primary structure comprises 214 residues: NADH-quinone oxidoreductase subunit C (214 aa).

Belongs to the complex I 30 kDa subunit family. NDH-1 is composed of 14 different subunits. Subunits NuoB, C, D, E, F, and G constitute the peripheral sector of the complex.

It is found in the cell inner membrane. It catalyses the reaction a quinone + NADH + 5 H(+)(in) = a quinol + NAD(+) + 4 H(+)(out). In terms of biological role, NDH-1 shuttles electrons from NADH, via FMN and iron-sulfur (Fe-S) centers, to quinones in the respiratory chain. The immediate electron acceptor for the enzyme in this species is believed to be ubiquinone. Couples the redox reaction to proton translocation (for every two electrons transferred, four hydrogen ions are translocated across the cytoplasmic membrane), and thus conserves the redox energy in a proton gradient. In Francisella tularensis subsp. tularensis (strain WY96-3418), this protein is NADH-quinone oxidoreductase subunit C.